The primary structure comprises 277 residues: Thymidylate synthase (277 aa).

Arginine 21 serves as a coordination point for dUMP. Residue histidine 51 participates in (6R)-5,10-methylene-5,6,7,8-tetrahydrofolate binding. 139-140 (RR) provides a ligand contact to dUMP. Cysteine 159 acts as the Nucleophile in catalysis. Residues 179-182 (RSAD), asparagine 190, and 220-222 (HIY) each bind dUMP. Aspartate 182 lines the (6R)-5,10-methylene-5,6,7,8-tetrahydrofolate pocket. Residue alanine 276 participates in (6R)-5,10-methylene-5,6,7,8-tetrahydrofolate binding.

The protein belongs to the thymidylate synthase family. Bacterial-type ThyA subfamily. In terms of assembly, homodimer.

It is found in the cytoplasm. The enzyme catalyses dUMP + (6R)-5,10-methylene-5,6,7,8-tetrahydrofolate = 7,8-dihydrofolate + dTMP. It functions in the pathway pyrimidine metabolism; dTTP biosynthesis. Functionally, catalyzes the reductive methylation of 2'-deoxyuridine-5'-monophosphate (dUMP) to 2'-deoxythymidine-5'-monophosphate (dTMP) while utilizing 5,10-methylenetetrahydrofolate (mTHF) as the methyl donor and reductant in the reaction, yielding dihydrofolate (DHF) as a by-product. This enzymatic reaction provides an intracellular de novo source of dTMP, an essential precursor for DNA biosynthesis. The polypeptide is Thymidylate synthase (Ruegeria sp. (strain TM1040) (Silicibacter sp.)).